We begin with the raw amino-acid sequence, 311 residues long: tRNA pseudouridine synthase B (311 aa).

The Nucleophile role is filled by Asp-52.

This sequence belongs to the pseudouridine synthase TruB family. Type 1 subfamily.

It catalyses the reaction uridine(55) in tRNA = pseudouridine(55) in tRNA. Its function is as follows. Responsible for synthesis of pseudouridine from uracil-55 in the psi GC loop of transfer RNAs. This chain is tRNA pseudouridine synthase B, found in Burkholderia mallei (strain ATCC 23344).